The primary structure comprises 305 residues: Protoheme IX farnesyltransferase (305 aa).

A run of 9 helical transmembrane segments spans residues 31-51, 52-72, 96-118, 122-144, 151-171, 180-200, 225-245, 247-267, and 281-301; these read VMSLVIFTGFVGMWLAPYSVH, PFIAGIAVVCIALGAGSAGAI, VIESDEALSFGLITGFFAVFFMA, NLLASFLLLFTIFYYICIYTIWL, NIVIGGVSGALPPVIGYAAVS, ILFLIIFIWTPPHSWALALFC, ILIYSILLFIVSLMPFFIGMN, FIYLIISGILGVVFLYYAGSL, and FAYSIFYLFFIFLLLYSTNTI.

This sequence belongs to the UbiA prenyltransferase family. Protoheme IX farnesyltransferase subfamily.

Its subcellular location is the cell inner membrane. The enzyme catalyses heme b + (2E,6E)-farnesyl diphosphate + H2O = Fe(II)-heme o + diphosphate. The protein operates within porphyrin-containing compound metabolism; heme O biosynthesis; heme O from protoheme: step 1/1. Functionally, converts heme B (protoheme IX) to heme O by substitution of the vinyl group on carbon 2 of heme B porphyrin ring with a hydroxyethyl farnesyl side group. The polypeptide is Protoheme IX farnesyltransferase (Rickettsia peacockii (strain Rustic)).